Here is a 440-residue protein sequence, read N- to C-terminus: Tetratricopeptide repeat protein 5 (440 aa).

TPR repeat units lie at residues E7–L61, A68–L98, V103–L130, K136–M174, and G179–V216. The short motif at L13–Y24 is the Nuclear export signal element. Phosphoserine; by ATM is present on S203. Phosphoserine; by CHEK2 is present on S221. The TPR 6 repeat unit spans residues P224–L253. Positions K285–K287 are mediates interaction with 28S rRNA of ribosome-coding tubulin.

Interacts with JMY and p300/EP300; the interaction occurs in the nucleus and augments the association between JMY and p300/EP300 in response to DNA damage. Interacts with PRMT5; the interaction is DNA damage-dependent and promotes PRMT5 interaction with p53/TP53 and subsequent methylation. Forms a complex with HSF1 and p300/EP300; these interactions augment chromatin-bound HSF1 and p300/EP300 histone acetyltransferase activity, resulting in enhanced heat-shock-responsive transcription. Interacts with JMY; the interaction occurs in the cytoplasm and results in the inhibition of JYM's nucleation activity. Interacts with ribosome-coding tubulin (via 60S subunit 28S rRNA and protein uL24/RPL26) and the N-terminal of nascent tubulin polypeptide (via alpha-tubulin MREC motif and beta-tubulin MREI motif); these interactions result in tubulin mRNA-targeted degradation. Interacts with ATP5F1B; the interaction occurs in the mitochondria and results in ATP production decrease. Interacts with p53/TP53; the interaction occurs in the mitochondria and results in increased apoptosis. In terms of processing, phosphorylation by ATM kinase induces nuclear accumulation while interfering with nuclear export, and phosphorylation by CHEK2 kinase enhances nuclear stability. In terms of tissue distribution, expressed in heart, brain, spleen, lung, liver, skeletal muscle, kidney and testis.

The protein localises to the nucleus. Its subcellular location is the cytoplasm. It is found in the cytoplasmic vesicle. It localises to the mitochondrion matrix. In terms of biological role, cofactor involved in the regulation of various cellular mechanisms such as actin regulation, autophagy, chromatin regulation and DNA repair. In physiological conditions, interacts with cofactor JMY in the cytoplasm which prevents JMY's actin nucleation activity and ability to activate the Arp2/3 complex. Acts as a negative regulator of nutrient stress-induced autophagy by inhibiting JMY's interaction with MAP1LC3B, thereby preventing autophagosome formation. Involves in tubulin autoregulation by promoting its degradation in response to excess soluble tubulin. To do so, associates with the active ribosome near the ribosome exit tunnel and with nascent tubulin polypeptides early during their translation, triggering tubulin mRNA-targeted degradation. Following DNA damage, phosphorylated by DNA damage responsive protein kinases ATM and CHEK2, leading to its nuclear accumulation and stability. Nuclear TTC5/STRAP promotes the assembly of a stress-responsive p53/TP53 coactivator complex, which includes the coactivators JMY and p300, thereby increasing p53/TP53-dependent transcription and apoptosis. Also recruits arginine methyltransferase PRMT5 to p53/TP53 when DNA is damaged, allowing PRMT5 to methylate p53/TP53. In DNA stress conditions, also prevents p53/TP53 degradation by E3 ubiquitin ligase MDM2. Upon heat-shock stress, forms a chromatin-associated complex with heat-shock factor 1 HSF1 and p300/EP300 to stimulate heat-shock-responsive transcription, thereby increasing cell survival. Mitochondrial TTC5/STRAP interacts with ATP synthase subunit beta ATP5F1B which decreased ATP synthase activity and lowers mitochondrial ATP production, thereby regulating cellular respiration and mitochondrial-dependent apoptosis. Mitochondrial TTC5/STRAP also regulates p53/TP53-mediated apoptosis. The polypeptide is Tetratricopeptide repeat protein 5 (Mus musculus (Mouse)).